The primary structure comprises 212 residues: Ribosome biogenesis protein RLP7 (212 aa).

This sequence belongs to the universal ribosomal protein uL30 family.

The protein localises to the nucleus. Its subcellular location is the nucleolus. Functionally, involved in the biogenesis of the 60S ribosomal subunit. May act as a specificity factor that binds precursor rRNAs and tethers the enzymes that carry out the early 5' to 3' exonucleolytic reactions that generate the mature rRNAs. This Cyberlindnera jadinii (Torula yeast) protein is Ribosome biogenesis protein RLP7 (RLP7).